Consider the following 485-residue polypeptide: Terminase, large subunit (485 aa).

ADP contacts are provided by residues 17 to 22 (KPHHVQ), 40 to 45 (QSGKSE), and Arg79. The interval 22-197 (QLAIHRSTAK…EFFLMGWRGG (176 aa)) is ATPase activity. ATP is bound by residues Gln97 and Gln99. The Walker A motif signature appears at 125 to 131 (SEFRGKS). The Walker B motif signature appears at 145 to 150 (FVILDE). Residue Glu150 is the For ATPase activity of the active site. Residues 256-438 (SNSVFSGLDM…DIVMSLALAY (183 aa)) form a nuclease region. 3 residues coordinate Mg(2+): Asp294, Asp347, and Asp429.

Belongs to the Tequatrovirus large terminase family. In terms of assembly, interacts with the terminase small subunit; the active complex is composed of a pentamer of terminase large subunits and a dodecamer of terminase small subunits. Interacts with the portal protein. Mg(2+) is required as a cofactor.

In terms of biological role, the terminase large subunit acts as an ATP driven molecular motor necessary for viral DNA translocation into empty capsids and as an endonuclease that cuts the viral genome to initiate and to end a packaging reaction The terminase lies at a unique vertex of the procapsid and is composed of two subunits, a small terminase subunit involved in viral DNA recognition (packaging sequence), and a large terminase subunit possessing endonucleolytic and ATPase activities. Both terminase subunits heterooligomerize and are docked on the portal protein to form the packaging machine. The terminase large subunit exhibits endonuclease activity and cleaves the viral genome concatemer. Once the capsid is packaged with the DNA, the terminase complex is substituted by the tail. In Thermus thermophilus (Thermus thermophilus phage P23-45), this protein is Terminase, large subunit.